The following is a 213-amino-acid chain: Kynurenine formamidase (213 aa).

Trp18 provides a ligand contact to substrate. Zn(2+)-binding residues include His48, His52, and Asp54. His58 functions as the Proton donor/acceptor in the catalytic mechanism. His160 and Glu172 together coordinate Zn(2+).

Belongs to the Cyclase 1 superfamily. KynB family. In terms of assembly, homodimer. The cofactor is Zn(2+).

The enzyme catalyses N-formyl-L-kynurenine + H2O = L-kynurenine + formate + H(+). It participates in amino-acid degradation; L-tryptophan degradation via kynurenine pathway; L-kynurenine from L-tryptophan: step 2/2. Catalyzes the hydrolysis of N-formyl-L-kynurenine to L-kynurenine, the second step in the kynurenine pathway of tryptophan degradation. This Burkholderia pseudomallei (strain 1710b) protein is Kynurenine formamidase.